We begin with the raw amino-acid sequence, 4085 residues long: Replicase polyprotein 1a (4085 aa).

The 108-residue stretch at 2-109 folds into the CoV Nsp1 globular domain; sequence ACNRVTLAVA…EFDVVFGKRG (108 aa). Residues 113–359 enclose the CoV Nsp2 N-terminal domain; sequence VTYTDQYLCG…RNSVTDECRL (247 aa). Zn(2+) is bound by residues Cys-246, Cys-248, Cys-265, and Cys-266. Positions 246 to 266 are C4; that stretch reads CTCGTKSWSVGDWTGFKSSCC. A CoV Nsp2 middle domain is found at 389–775; the sequence is YDDIFAESKP…LEAYNAFLDT (387 aa). The CoV Nsp2 C-terminal domain maps to 773–897; it reads LDTVVSTVKI…LPVAFTKAAG (125 aa). Residues 898-993 enclose the Ubiquitin-like 1 domain; sequence GKVSFSDDVE…VMISEWPLSV (96 aa). Positions 1016-1268 constitute a Peptidase C16 1 domain; it reads VNSIFDIETV…DTTPKEEFVV (253 aa). Cys-1054 serves as the catalytic For PL1-PRO activity. The C4-type 1; degenerate zinc finger occupies 1126-1157; that stretch reads CSCTSGRLEESGAVLFCTPTKKAFPYGTCLNC. Residues His-1205 and Asp-1218 each act as for PL1-PRO activity in the active site. A Macro domain is found at 1269 to 1436; it reads KEKLNAFLVH…KVKDFVSGLV (168 aa). The 56-residue stretch at 1600 to 1655 folds into the Ubiquitin-like 2 domain; sequence AKVITIKVTEDGVNVHDVTVTTDKSFEQQVGVIADKDKDLSGAVPSDLNTSELLTK. In terms of domain architecture, Peptidase C16 2 spans 1663–1914; sequence EFYGFKDAVT…TVKPKPVINQ (252 aa). Catalysis depends on Cys-1701, which acts as the For PL2-PRO activity. Residues Cys-1780, Cys-1783, Cys-1813, and His-1815 each coordinate Zn(2+). The segment at 1780–1815 adopts a C4-type 2; atypical zinc-finger fold; the sequence is CVECDAKFKNSVASINSAIVCASVKRDGVQVGYCVH. Residues His-1863 and Asp-1868 each act as for PL2-PRO activity in the active site. The HD1 stretch occupies residues 1925 to 2115; it reads FGDFLIHNFV…STVGVFLGYK (191 aa). The helical transmembrane segment at 1998 to 2018 threads the bilayer; that stretch reads LLLLIYTLYSVVLLCVRFGPF. Positions 2005–2070 constitute a 3Ecto domain; the sequence is LYSVVLLCVR…LDVVWKHITD (66 aa). 2 cysteine pairs are disulfide-bonded: Cys-2021–Cys-2048 and Cys-2039–Cys-2045. Transmembrane regions (helical) follow at residues 2068–2088 and 2095–2115; these read ITDPLFSNMQPFIVMVLLLIF and CFLLYFVAQMISTVGVFLGYK. The tract at residues 2144-2234 is Y1; it reads SFVRHVLFGC…ITKTNVQPTG (91 aa). Positions 2144–2483 constitute a CoV Nsp3 Y domain; that stretch reads SFVRHVLFGC…PATSIVAKQG (340 aa). Residues His-2148, Cys-2153, Cys-2158, Cys-2161, Cys-2194, His-2197, Cys-2201, and Cys-2204 each contribute to the Zn(2+) site. The ZF1 stretch occupies residues 2148-2161; it reads HVLFGCENPDCIAC. Residues 2194 to 2204 form a ZF2 region; it reads CKKHRFFCVDC. Residues 2235–2324 form a Y2 region; it reads PAYVMIDKVE…LVDSELLSTL (90 aa). The tract at residues 2235-2483 is coV-Y; the sequence is PAYVMIDKVE…PATSIVAKQG (249 aa). A Y3 region spans residues 2325–2381; that stretch reads SVDFNGVLHKAYIDVLRNSFGKDLNANMSLAECKRALGLSISDHEFTSAISNAHRCD. The segment at 2382 to 2483 is Y4; that stretch reads VLLSDLSFNN…PATSIVAKQG (102 aa). 6 helical membrane passes run 2491 to 2511, 2731 to 2751, 2755 to 2775, 2782 to 2802, 2809 to 2829, and 2834 to 2854; these read LTWLWLLCGLVCLIQFYLCFF, LWNLVFNILSMFSSSFSVAAM, ILLNCALGAFAIFCCFLVTKF, LSVGVCTVVVAVLLNNVSYIV, MIAYAILYFFATRSLRYAWIW, and LIAYISFAPWWLCAWYFLAML. The tract at residues 2491 to 2854 is HD2; the sequence is LTWLWLLCGL…LCAWYFLAML (364 aa). The 96-residue stretch at 2870 to 2965 folds into the Nsp4C domain; sequence LFEGDKFVGT…PTVSYGSTLQ (96 aa). The Peptidase C30 domain occupies 2966-3267; sequence AGLRKMAQPS…VKQMFGVNLQ (302 aa). Catalysis depends on for 3CL-PRO activity residues His-3006 and Cys-3109. The next 7 membrane-spanning stretches (helical) occupy residues 3281–3301, 3304–3324, 3328–3348, 3367–3387, 3401–3421, 3422–3442, and 3467–3487; these read FAGFFVMFWAELFVYTTTIWV, GFLTPFMILLVALSLCLTFVV, VLFLQVFLLPSIIVAAIQNCA, VMQMDIQGFVNIFICLFVALL, CTYLFSLIAVLYTALYSYDYV, SLLVMLLCAISNEWYIGAIIF, and LLFYMLLGFVSCMYYGLLYWI. The HD3 stretch occupies residues 3281–3487; that stretch reads FAGFFVMFWA…CMYYGLLYWI (207 aa). Positions 3547–3629 constitute a RdRp Nsp7 cofactor domain; sequence SKLTDLKCTN…SYFENDSILQ (83 aa). The RdRp Nsp8 cofactor domain maps to 3630-3824; it reads SVASSFVGMP…LTCERVVKLQ (195 aa). The 109-residue stretch at 3825-3933 folds into the Nsp9 ssRNA-binding domain; the sequence is NNEIMPGKMK…GYIGATVRLQ (109 aa). The ExoN/MTase coactivator domain maps to 3934–4072; the sequence is AGKQTEFVSN…DRTAIQSFDN (139 aa). Zn(2+)-binding residues include Cys-4007, Cys-4010, His-4016, Cys-4023, Cys-4049, Cys-4052, Cys-4060, and Cys-4062. 2 zinc fingers span residues 4007 to 4023 and 4049 to 4062; these read CIYCRAHVAHPTMDGFC and CKVCGCWLNHGCTC.

The protein belongs to the coronaviruses polyprotein 1ab family. 3CL-PRO exists as monomer and homodimer. Eight copies of nsp7 and eight copies of nsp8 assemble to form a heterohexadecamer. Nsp9 is a dimer. Nsp10 forms a dodecamer. Post-translationally, specific enzymatic cleavages in vivo by its own proteases yield mature proteins. 3CL-PRO and PL-PRO proteinases are autocatalytically processed.

The protein resides in the host membrane. Its subcellular location is the host cytoplasm. The protein localises to the host perinuclear region. The catalysed reaction is Thiol-dependent hydrolysis of ester, thioester, amide, peptide and isopeptide bonds formed by the C-terminal Gly of ubiquitin (a 76-residue protein attached to proteins as an intracellular targeting signal).. The papain-like proteinase 1 (PLP1) and papain-like proteinase 2 (PLP2) are responsible for the cleavages located at the N-terminus of the replicase polyprotein. In addition, PLP2 possesses a deubiquitinating/deISGylating activity and processes both 'Lys-48'- and 'Lys-63'-linked polyubiquitin chains from cellular substrates. PLP2 also antagonizes innate immune induction of type I interferon by blocking the nuclear translocation of host IRF-3. Functionally, responsible for the majority of cleavages as it cleaves the C-terminus of replicase polyprotein at 11 sites. Recognizes substrates containing the core sequence [ILMVF]-Q-|-[SGACN]. Inhibited by the substrate-analog Cbz-Val-Asn-Ser-Thr-Leu-Gln-CMK. Also contains an ADP-ribose-1''-phosphate (ADRP)-binding function. Its function is as follows. Nsp7-nsp8 hexadecamer may possibly confer processivity to the polymerase, maybe by binding to dsRNA or by producing primers utilized by the latter. In terms of biological role, nsp9 is a ssRNA-binding protein. The sequence is that of Replicase polyprotein 1a from Homo sapiens (Human).